The primary structure comprises 157 residues: SsrA-binding protein (157 aa).

This sequence belongs to the SmpB family.

The protein resides in the cytoplasm. In terms of biological role, required for rescue of stalled ribosomes mediated by trans-translation. Binds to transfer-messenger RNA (tmRNA), required for stable association of tmRNA with ribosomes. tmRNA and SmpB together mimic tRNA shape, replacing the anticodon stem-loop with SmpB. tmRNA is encoded by the ssrA gene; the 2 termini fold to resemble tRNA(Ala) and it encodes a 'tag peptide', a short internal open reading frame. During trans-translation Ala-aminoacylated tmRNA acts like a tRNA, entering the A-site of stalled ribosomes, displacing the stalled mRNA. The ribosome then switches to translate the ORF on the tmRNA; the nascent peptide is terminated with the 'tag peptide' encoded by the tmRNA and targeted for degradation. The ribosome is freed to recommence translation, which seems to be the essential function of trans-translation. This is SsrA-binding protein from Christiangramia forsetii (strain DSM 17595 / CGMCC 1.15422 / KT0803) (Gramella forsetii).